Here is a 63-residue protein sequence, read N- to C-terminus: Large ribosomal subunit protein uL29 (63 aa).

Belongs to the universal ribosomal protein uL29 family.

This chain is Large ribosomal subunit protein uL29, found in Aeromonas salmonicida (strain A449).